We begin with the raw amino-acid sequence, 259 residues long: Global transcriptional regulator CodY (259 aa).

The tract at residues 1–155 (MALLQKTRII…GATVVGMEIL (155 aa)) is GAF domain. A DNA-binding region (H-T-H motif) is located at residues 203–222 (ASKIADRVGITRSVIVNALR). Position 215 is a phosphoserine (S215).

This sequence belongs to the CodY family.

Its subcellular location is the cytoplasm. DNA-binding global transcriptional regulator which is involved in the adaptive response to starvation and acts by directly or indirectly controlling the expression of numerous genes in response to nutrient availability. During rapid exponential growth, CodY is highly active and represses genes whose products allow adaptation to nutrient depletion. This Bacillus pumilus (strain SAFR-032) protein is Global transcriptional regulator CodY.